We begin with the raw amino-acid sequence, 281 residues long: Non-selective voltage-gated ion channel 2 (281 aa).

Arg11 and Arg19 together coordinate ATP.

It belongs to the eukaryotic mitochondrial porin family.

It localises to the mitochondrion outer membrane. Functionally, non-selective voltage-gated ion channel that mediates the transport of anions and cations through the mitochondrion outer membrane. The channel adopts an open conformation at low or zero membrane potential and a closed conformation at potentials above 30-40 mV. The open state has a weak anion selectivity whereas the closed state is cation-selective. Does not confer permeability to NADH. Its function is as follows. Catalyzes the scrambling of phospholipids across the outer mitochondrial membrane; the mechanism is unrelated to channel activity and is capable of translocating both anionic and zwitterionic phospholipids. This is Non-selective voltage-gated ion channel 2 (POR2) from Saccharomyces cerevisiae (strain ATCC 204508 / S288c) (Baker's yeast).